The following is a 468-amino-acid chain: MAAPISTVAESKELRGLNLIAAHSHIRGLGVDVDSLQPRPASQGLVGQEKARKAAAVILQMVKEGKIAGRAVLIAGPPSTGKTAIAMGMAQSLGPDVPFTMLAASEIFSMEMSKTEALTQAFRKSIGVRIKEESEIIEGEVVEIQIDRSVTGGNKQGKLTIKTTDMETIYDMGTKMIDSMTKERVMAGDIISIDKSSGKITKLGRSYARSRDYDAMGADVKFVQCPEGELQVRKEIVHTVSLHEIDVINSRSQGFLALFSGDTGEIRSEVRDQINVKVAEWKEEGKAEIIPGVLFIDEVHMLDIECYSYINRALEAELAPIVIMASNRGHSRIRGTTYNSPHGLPLDFLDRVVIVSTQHYSADEIRQILAIRAQEEEIDLSPDALALLTKIGQESNLRYASNIITTSHLLSQKRKAKEVSVDDVQRSYRLFYDPARSVKFVNQYEQRFIGDQGNVNFTASNGDAMEIS.

76–83 (GPPSTGKT) contacts ATP.

This sequence belongs to the RuvB family. As to quaternary structure, may form heterododecamers with RVB1. Component of the SWR1 chromatin remodeling complex, the INO80 chromatin remodeling complex, and of the R2TP complex.

It localises to the nucleus. The enzyme catalyses ATP + H2O = ADP + phosphate + H(+). DNA helicase which participates in several chromatin remodeling complexes, including the SWR1 and the INO80 complexes. The SWR1 complex mediates the ATP-dependent exchange of histone H2A for the H2A variant HZT1 leading to transcriptional regulation of selected genes by chromatin remodeling. The INO80 complex remodels chromatin by shifting nucleosomes and is involved in DNA repair. Also involved in pre-rRNA processing. This is RuvB-like helicase 2 (rvb2) from Emericella nidulans (strain FGSC A4 / ATCC 38163 / CBS 112.46 / NRRL 194 / M139) (Aspergillus nidulans).